The sequence spans 181 residues: Peptide deformylase (181 aa).

The Fe cation site is built by C104 and H146. Residue E147 is part of the active site. Residue H150 coordinates Fe cation.

Belongs to the polypeptide deformylase family. Fe(2+) is required as a cofactor.

It catalyses the reaction N-terminal N-formyl-L-methionyl-[peptide] + H2O = N-terminal L-methionyl-[peptide] + formate. Removes the formyl group from the N-terminal Met of newly synthesized proteins. Requires at least a dipeptide for an efficient rate of reaction. N-terminal L-methionine is a prerequisite for activity but the enzyme has broad specificity at other positions. The chain is Peptide deformylase from Helicobacter hepaticus (strain ATCC 51449 / 3B1).